The primary structure comprises 779 residues: Aconitate hydratase, mitochondrial (779 aa).

The N-terminal 28 residues, 1–28 (MIAMDRIARIPIARWTSRAFRVSAAARQ), are a transit peptide targeting the mitochondrion. Substrate is bound by residues Gln97 and 190-192 (DSH). [4Fe-4S] cluster-binding residues include Cys383, Cys446, and Cys449. Residues Arg472, Arg477, Arg605, and 668–669 (SR) contribute to the substrate site.

Belongs to the aconitase/IPM isomerase family. As to quaternary structure, monomer. [4Fe-4S] cluster serves as cofactor.

It localises to the mitochondrion. The enzyme catalyses citrate = D-threo-isocitrate. It functions in the pathway carbohydrate metabolism; tricarboxylic acid cycle; isocitrate from oxaloacetate: step 2/2. Its function is as follows. Catalyzes the isomerization of citrate to isocitrate via cis-aconitate. The polypeptide is Aconitate hydratase, mitochondrial (Gracilaria gracilis (Red alga)).